Consider the following 1431-residue polypeptide: Stabilin-2 (1431 aa).

Topologically, residues 1-1322 (SLPSLLTRLE…PPTAATAAHS (1322 aa)) are extracellular. The FAS1 domain maps to 2–130 (LPSLLTRLEQ…GVIHGLEKVL (129 aa)). 2 N-linked (GlcNAc...) asparagine glycosylation sites follow: Asn112 and Asn140. The Laminin EGF-like 1 domain occupies 207–272 (PQCQACPGRG…CSCVHGRCSQ (66 aa)). Disulfide bonds link Cys212/Cys226, Cys220/Cys236, Cys238/Cys247, Cys259/Cys270, Cys263/Cys280, Cys282/Cys291, Cys300/Cys310, Cys304/Cys320, Cys322/Cys333, Cys339/Cys352, Cys346/Cys362, Cys364/Cys375, Cys381/Cys394, Cys388/Cys404, Cys406/Cys417, Cys423/Cys436, Cys430/Cys446, and Cys448/Cys459. 2 N-linked (GlcNAc...) asparagine glycosylation sites follow: Asn231 and Asn243. EGF-like domains lie at 296–334 (TTDNCNGTCHTSANCLLDPDGKASCKCAAGFRGNGTVCT), 335–376 (AINA…IVCL), 377–418 (EINP…KVCS), and 419–460 (LINV…IVCR). Asn301 carries N-linked (GlcNAc...) asparagine glycosylation. Residue Asn329 is glycosylated (N-linked (GlcNAc...) asparagine). Asn437 carries an N-linked (GlcNAc...) asparagine glycan. FAS1 domains are found at residues 460 to 588 (RGSI…DKLL) and 604 to 745 (VLQN…DCLL). Residue Asn607 is glycosylated (N-linked (GlcNAc...) asparagine). The 66-residue stretch at 822-887 (PDCQACPGGP…SCSEHGQCDE (66 aa)) folds into the Laminin EGF-like 2 domain. 6 disulfides stabilise this stretch: Cys827-Cys841, Cys835-Cys851, Cys853-Cys862, Cys874-Cys885, Cys879-Cys895, and Cys897-Cys906. N-linked (GlcNAc...) asparagine glycosylation is present at Asn858. Residue Asn929 is glycosylated (N-linked (GlcNAc...) asparagine). EGF-like domains follow at residues 947 to 987 (VVDF…YSCI) and 988 to 1030 (EIDP…VDCE). 8 cysteine pairs are disulfide-bonded: Cys951/Cys964, Cys958/Cys973, Cys975/Cys986, Cys992/Cys1006, Cys1000/Cys1016, Cys1018/Cys1029, Cys1085/Cys1154, and Cys1109/Cys1130. A Link domain is found at 1063-1156 (GVFHLRSPLG…SEMWDVFCYR (94 aa)). Asn1145, Asn1161, Asn1233, Asn1249, and Asn1258 each carry an N-linked (GlcNAc...) asparagine glycan. In terms of domain architecture, FAS1 4 spans 1176–1310 (SGNLLQVLMS…GILHIISEPL (135 aa)). A helical transmembrane segment spans residues 1323–1343 (GLGTGIFCAVVLVTGAIALAA). The Cytoplasmic portion of the chain corresponds to 1344–1431 (YSYFRLKQRT…QQATTVTVPR (88 aa)). The tract at residues 1368–1378 (WLLASSSPRIS) is interaction with TMSB4X.

Interacts with GULP1, heparin, alpha-M/beta-2 integrin (ITGAM and ITGB2), and thymosin beta 4 (TMSB4X). In terms of processing, glycosylated. Proteolytically processed to yield a 175 kDa protein. In terms of tissue distribution, initially expressed in all vascular cells, including those of sinusoidal-like structures, vitellin veins, and hepatic veins or sinus venosus, in E13.5 fetal liver. The expression then progressively disappears in the portal and hepatic veins, but the expression in sinusoidals endothelial cells (SECs) is retained and becomes stronger during development.

It localises to the cytoplasm. The protein localises to the cell membrane. Phosphatidylserine receptor that enhances the engulfment of apoptotic cells. Hyaluronan receptor that binds to and mediates endocytosis of hyaluronic acid (HA). Also acts, in different species, as a primary systemic scavenger receptor for heparin (Hep), chondroitin sulfate (CS), dermatan sulfate (DS), nonglycosaminoglycan (GAG), acetylated low-density lipoprotein (AcLDL), pro-collagen propeptides and advanced glycation end products (AGE). May serve to maintain tissue integrity by supporting extracellular matrix turnover or it may contribute to maintaining fluidity of bodily liquids by resorption of hyaluronan. Counter receptor which plays an important role in lymphocyte recruitment in the hepatic vasculature. Binds to both Gram-positive and Gram-negative bacteria and may play a role in defense against bacterial infection. The proteolytically processed 175 kDa form also functions as an endocytosis receptor for heparin internalization as well as HA and CS. The protein is Stabilin-2 of Rattus norvegicus (Rat).